We begin with the raw amino-acid sequence, 68 residues long: Arabinogalactan peptide 1 (68 aa).

The first 30 residues, 1 to 30 (MAGQLKSKIVAVAVAAVVVVASSLVGTASA), serve as a signal peptide directing secretion. The GPI-anchor amidated serine moiety is linked to residue Ser40. The propeptide at 41–68 (GATATAAAAPAFAAVSVAAAALGGYLFC) is removed in mature form.

The protein belongs to the AG-peptide AGP family. O-glycosylated on hydroxyprolines; noncontiguous hydroxylproline residues are glycosylated with arabinogalactan. In terms of tissue distribution, expressed in roots, stems, flowers and seeds.

Its subcellular location is the vacuole. The protein resides in the aleurone grain membrane. In terms of biological role, proteoglycan that seems to be implicated in diverse developmental roles such as differentiation, cell-cell recognition, embryogenesis and programmed cell death. The polypeptide is Arabinogalactan peptide 1 (AGPEP1) (Oryza sativa subsp. japonica (Rice)).